A 114-amino-acid polypeptide reads, in one-letter code: Large ribosomal subunit protein bL17 (114 aa).

This sequence belongs to the bacterial ribosomal protein bL17 family. Part of the 50S ribosomal subunit. Contacts protein L32.

The sequence is that of Large ribosomal subunit protein bL17 from Clostridium acetobutylicum (strain ATCC 824 / DSM 792 / JCM 1419 / IAM 19013 / LMG 5710 / NBRC 13948 / NRRL B-527 / VKM B-1787 / 2291 / W).